Consider the following 104-residue polypeptide: Small ribosomal subunit protein bS16 (104 aa).

Belongs to the bacterial ribosomal protein bS16 family.

This chain is Small ribosomal subunit protein bS16, found in Gemmatimonas aurantiaca (strain DSM 14586 / JCM 11422 / NBRC 100505 / T-27).